Consider the following 390-residue polypeptide: Putative nickel insertion protein (390 aa).

It belongs to the LarC family.

In Geotalea uraniireducens (strain Rf4) (Geobacter uraniireducens), this protein is Putative nickel insertion protein.